A 350-amino-acid chain; its full sequence is 3-dehydroquinate synthase (350 aa).

Residues 63-68 (DGEEYK), 97-101 (GVIGD), 121-122 (TT), K134, K143, and 161-164 (FLKT) each bind NAD(+). 3 residues coordinate Zn(2+): E176, H235, and H252.

It belongs to the sugar phosphate cyclases superfamily. Dehydroquinate synthase family. Requires Co(2+) as cofactor. Zn(2+) is required as a cofactor. It depends on NAD(+) as a cofactor.

It is found in the cytoplasm. The catalysed reaction is 7-phospho-2-dehydro-3-deoxy-D-arabino-heptonate = 3-dehydroquinate + phosphate. The protein operates within metabolic intermediate biosynthesis; chorismate biosynthesis; chorismate from D-erythrose 4-phosphate and phosphoenolpyruvate: step 2/7. Functionally, catalyzes the conversion of 3-deoxy-D-arabino-heptulosonate 7-phosphate (DAHP) to dehydroquinate (DHQ). This is 3-dehydroquinate synthase from Sulfurovum sp. (strain NBC37-1).